An 877-amino-acid chain; its full sequence is Phosphoenolpyruvate carboxylase (877 aa).

Active-site residues include H137 and K542.

The protein belongs to the PEPCase type 1 family. The cofactor is Mg(2+).

The catalysed reaction is oxaloacetate + phosphate = phosphoenolpyruvate + hydrogencarbonate. Its function is as follows. Forms oxaloacetate, a four-carbon dicarboxylic acid source for the tricarboxylic acid cycle. The sequence is that of Phosphoenolpyruvate carboxylase from Tolumonas auensis (strain DSM 9187 / NBRC 110442 / TA 4).